A 325-amino-acid polypeptide reads, in one-letter code: ATP-dependent 6-phosphofructokinase (325 aa).

G12 is an ATP binding site. An ADP-binding site is contributed by 22-26 (RTIVK). ATP contacts are provided by residues 73–74 (RY) and 103–106 (GDGS). D104 contributes to the Mg(2+) binding site. 126–128 (TID) serves as a coordination point for substrate. The active-site Proton acceptor is D128. Position 155 (R155) interacts with ADP. 170-172 (MGH) is a substrate binding site. ADP-binding positions include 186–188 (GAE), K213, and 215–217 (KRS). Residues E224, R246, and 252 to 255 (HTQR) each bind substrate.

It belongs to the phosphofructokinase type A (PFKA) family. ATP-dependent PFK group I subfamily. Prokaryotic clade 'B1' sub-subfamily. Homotetramer. Mg(2+) serves as cofactor.

Its subcellular location is the cytoplasm. The enzyme catalyses beta-D-fructose 6-phosphate + ATP = beta-D-fructose 1,6-bisphosphate + ADP + H(+). Its pathway is carbohydrate degradation; glycolysis; D-glyceraldehyde 3-phosphate and glycerone phosphate from D-glucose: step 3/4. Allosterically activated by ADP and other diphosphonucleosides, and allosterically inhibited by phosphoenolpyruvate. Catalyzes the phosphorylation of D-fructose 6-phosphate to fructose 1,6-bisphosphate by ATP, the first committing step of glycolysis. This Mycoplasma mobile (strain ATCC 43663 / 163K / NCTC 11711) (Mesomycoplasma mobile) protein is ATP-dependent 6-phosphofructokinase.